The chain runs to 116 residues: Aspartate 1-decarboxylase (116 aa).

Residue Ser-25 is the Schiff-base intermediate with substrate; via pyruvic acid of the active site. Ser-25 carries the post-translational modification Pyruvic acid (Ser). Position 57 (Thr-57) interacts with substrate. The active-site Proton donor is the Tyr-58. Residue 73–75 (GPA) coordinates substrate.

It belongs to the PanD family. As to quaternary structure, heterooctamer of four alpha and four beta subunits. Pyruvate serves as cofactor. Is synthesized initially as an inactive proenzyme, which is activated by self-cleavage at a specific serine bond to produce a beta-subunit with a hydroxyl group at its C-terminus and an alpha-subunit with a pyruvoyl group at its N-terminus.

Its subcellular location is the cytoplasm. It carries out the reaction L-aspartate + H(+) = beta-alanine + CO2. It functions in the pathway cofactor biosynthesis; (R)-pantothenate biosynthesis; beta-alanine from L-aspartate: step 1/1. Its function is as follows. Catalyzes the pyruvoyl-dependent decarboxylation of aspartate to produce beta-alanine. The sequence is that of Aspartate 1-decarboxylase from Flavobacterium psychrophilum (strain ATCC 49511 / DSM 21280 / CIP 103535 / JIP02/86).